We begin with the raw amino-acid sequence, 304 residues long: Coenzyme PQQ synthesis protein B (304 aa).

It belongs to the PqqB family.

It functions in the pathway cofactor biosynthesis; pyrroloquinoline quinone biosynthesis. Functionally, may be involved in the transport of PQQ or its precursor to the periplasm. The protein is Coenzyme PQQ synthesis protein B of Gluconobacter oxydans (strain 621H) (Gluconobacter suboxydans).